Reading from the N-terminus, the 396-residue chain is Elongation factor Tu (396 aa).

In terms of domain architecture, tr-type G spans 10 to 205 (KPHVNIGTIG…ACDDNIPDPV (196 aa)). The tract at residues 19–26 (GHVDHGKT) is G1. Residue 19 to 26 (GHVDHGKT) coordinates GTP. Thr26 contacts Mg(2+). A G2 region spans residues 62 to 66 (GITIN). A G3 region spans residues 83-86 (DAPG). Residues 83–87 (DAPGH) and 138–141 (NKCD) contribute to the GTP site. The tract at residues 138 to 141 (NKCD) is G4. The interval 175 to 177 (SAL) is G5.

This sequence belongs to the TRAFAC class translation factor GTPase superfamily. Classic translation factor GTPase family. EF-Tu/EF-1A subfamily. As to quaternary structure, monomer.

It localises to the cytoplasm. The enzyme catalyses GTP + H2O = GDP + phosphate + H(+). Its function is as follows. GTP hydrolase that promotes the GTP-dependent binding of aminoacyl-tRNA to the A-site of ribosomes during protein biosynthesis. The protein is Elongation factor Tu of Corynebacterium glutamicum (strain R).